The chain runs to 436 residues: F-box protein SKIP16 (436 aa).

Positions 75-111 constitute an F-box; degenerate domain; it reads RESFRMYPWNLVKRVRLCWDNLKQWLTLNFPEAKATL. The ApaG domain maps to 295–436; that stretch reads VSVTNGVQVR…FPLELPDYIF (142 aa).

Part of a SCF (ASK-cullin-F-box) protein ligase complex. Interacts with SKP1A/ASK1, SKP1B/ASK2, ASK4, ASK11 and ASK13.

Its pathway is protein modification; protein ubiquitination. Component of SCF(ASK-cullin-F-box) E3 ubiquitin ligase complexes, which may mediate the ubiquitination and subsequent proteasomal degradation of target proteins. This Arabidopsis thaliana (Mouse-ear cress) protein is F-box protein SKIP16 (SKIP16).